We begin with the raw amino-acid sequence, 600 residues long: DNA mismatch repair protein MutL (600 aa).

It belongs to the DNA mismatch repair MutL/HexB family.

Its function is as follows. This protein is involved in the repair of mismatches in DNA. It is required for dam-dependent methyl-directed DNA mismatch repair. May act as a 'molecular matchmaker', a protein that promotes the formation of a stable complex between two or more DNA-binding proteins in an ATP-dependent manner without itself being part of a final effector complex. This is DNA mismatch repair protein MutL from Sinorhizobium fredii (strain NBRC 101917 / NGR234).